A 468-amino-acid chain; its full sequence is Ribulose bisphosphate carboxylase large chain (468 aa).

N6,N6,N6-trimethyllysine is present on Lys5. Substrate-binding residues include Asn114 and Thr164. The active-site Proton acceptor is the Lys166. Substrate is bound at residue Lys168. Mg(2+) contacts are provided by Lys192, Asp194, and Glu195. Lys192 is subject to N6-carboxylysine. The active-site Proton acceptor is His285. The substrate site is built by Arg286, His318, and Ser370.

This sequence belongs to the RuBisCO large chain family. Type I subfamily. In terms of assembly, heterohexadecamer of 8 large chains and 8 small chains; disulfide-linked. The disulfide link is formed within the large subunit homodimers. Mg(2+) serves as cofactor. Post-translationally, the disulfide bond which can form in the large chain dimeric partners within the hexadecamer appears to be associated with oxidative stress and protein turnover.

Its subcellular location is the plastid. The protein localises to the chloroplast. The catalysed reaction is 2 (2R)-3-phosphoglycerate + 2 H(+) = D-ribulose 1,5-bisphosphate + CO2 + H2O. The enzyme catalyses D-ribulose 1,5-bisphosphate + O2 = 2-phosphoglycolate + (2R)-3-phosphoglycerate + 2 H(+). In terms of biological role, ruBisCO catalyzes two reactions: the carboxylation of D-ribulose 1,5-bisphosphate, the primary event in carbon dioxide fixation, as well as the oxidative fragmentation of the pentose substrate in the photorespiration process. Both reactions occur simultaneously and in competition at the same active site. The protein is Ribulose bisphosphate carboxylase large chain of Tecoma stans (Yellow bells).